Consider the following 110-residue polypeptide: Nucleoid-associated protein Mvan_5528 (110 aa).

Belongs to the YbaB/EbfC family. As to quaternary structure, homodimer.

It localises to the cytoplasm. It is found in the nucleoid. Functionally, binds to DNA and alters its conformation. May be involved in regulation of gene expression, nucleoid organization and DNA protection. This chain is Nucleoid-associated protein Mvan_5528, found in Mycolicibacterium vanbaalenii (strain DSM 7251 / JCM 13017 / BCRC 16820 / KCTC 9966 / NRRL B-24157 / PYR-1) (Mycobacterium vanbaalenii).